A 409-amino-acid chain; its full sequence is MSKYFKYISEKGITNLANYHYSGVDNSFCGNKFLKHWWNYCVNFTPLWLAPNIITLVGLLCNIGMYLIMYVHCPTLTEEAPRWCYFAVAFLIFAYQTLDNVDGKQARKTKSSSPLGELFDHVCDALSVAMFAIVMSATLRIGPYWTFFSFIVGMWPFYLAHWEEYHAGILVMGEFNGPTEAQVLFMIIEIITGIFGSDIWTYGTSTTVGKIATVFVSIGAVVTCLQNFTNTYKLENRMTFGKCLLQLTPICLFTALIVIWASVSNLITEQPHLFIMTLGILFGYIQSRYITQRVCHDDCSLFYPIFVPIIIVVLNSILASSDVHLVSETVALWILFSIACAQFLLFSYFTTQQLCDHLKIKVFTIPYPSNSGIGPSQEYENSLLSQMEEGSSSIGNSTDDINPSEIEEI.

A run of 10 helical transmembrane segments spans residues 53–73 (IITLVGLLCNIGMYLIMYVHC), 83–103 (WCYFAVAFLIFAYQTLDNVDG), 115–135 (LGELFDHVCDALSVAMFAIVM), 141–161 (IGPYWTFFSFIVGMWPFYLAH), 183–203 (VLFMIIEIITGIFGSDIWTYG), 205–225 (STTVGKIATVFVSIGAVVTCL), 243–263 (CLLQLTPICLFTALIVIWASV), 265–285 (NLITEQPHLFIMTLGILFGYI), 299–319 (CSLFYPIFVPIIIVVLNSILA), and 329–349 (TVALWILFSIACAQFLLFSYF). Polar residues predominate over residues 388-401 (EEGSSSIGNSTDDI). The tract at residues 388–409 (EEGSSSIGNSTDDINPSEIEEI) is disordered.

The protein belongs to the CDP-alcohol phosphatidyltransferase class-I family.

It localises to the membrane. This is an uncharacterized protein from Dictyostelium discoideum (Social amoeba).